A 114-amino-acid chain; its full sequence is Large ribosomal subunit protein uL22 (114 aa).

It belongs to the universal ribosomal protein uL22 family. As to quaternary structure, part of the 50S ribosomal subunit.

In terms of biological role, this protein binds specifically to 23S rRNA; its binding is stimulated by other ribosomal proteins, e.g. L4, L17, and L20. It is important during the early stages of 50S assembly. It makes multiple contacts with different domains of the 23S rRNA in the assembled 50S subunit and ribosome. Its function is as follows. The globular domain of the protein is located near the polypeptide exit tunnel on the outside of the subunit, while an extended beta-hairpin is found that lines the wall of the exit tunnel in the center of the 70S ribosome. The protein is Large ribosomal subunit protein uL22 of Streptococcus pneumoniae (strain Taiwan19F-14).